The following is a 382-amino-acid chain: Cell division protein FtsZ (382 aa).

Residues 21-25 (GGGSN), 108-110 (GTG), E139, R143, and D187 each bind GTP. The tract at residues 322 to 382 (RAQQQSNFNR…FLRNRRRKSR (61 aa)) is disordered. The span at 340-352 (KSKEKEAEKKEPR) shows a compositional bias: basic and acidic residues.

The protein belongs to the FtsZ family. In terms of assembly, homodimer. Polymerizes to form a dynamic ring structure in a strictly GTP-dependent manner. Interacts directly with several other division proteins.

It is found in the cytoplasm. In terms of biological role, essential cell division protein that forms a contractile ring structure (Z ring) at the future cell division site. The regulation of the ring assembly controls the timing and the location of cell division. One of the functions of the FtsZ ring is to recruit other cell division proteins to the septum to produce a new cell wall between the dividing cells. Binds GTP and shows GTPase activity. This Halalkalibacterium halodurans (strain ATCC BAA-125 / DSM 18197 / FERM 7344 / JCM 9153 / C-125) (Bacillus halodurans) protein is Cell division protein FtsZ.